Consider the following 256-residue polypeptide: Thiazole synthase (256 aa).

The active-site Schiff-base intermediate with DXP is Lys-95. Residues Gly-156, 182–183 (AG), and 204–205 (NT) contribute to the 1-deoxy-D-xylulose 5-phosphate site.

It belongs to the ThiG family. As to quaternary structure, homotetramer. Forms heterodimers with either ThiH or ThiS.

Its subcellular location is the cytoplasm. The enzyme catalyses [ThiS sulfur-carrier protein]-C-terminal-Gly-aminoethanethioate + 2-iminoacetate + 1-deoxy-D-xylulose 5-phosphate = [ThiS sulfur-carrier protein]-C-terminal Gly-Gly + 2-[(2R,5Z)-2-carboxy-4-methylthiazol-5(2H)-ylidene]ethyl phosphate + 2 H2O + H(+). It participates in cofactor biosynthesis; thiamine diphosphate biosynthesis. In terms of biological role, catalyzes the rearrangement of 1-deoxy-D-xylulose 5-phosphate (DXP) to produce the thiazole phosphate moiety of thiamine. Sulfur is provided by the thiocarboxylate moiety of the carrier protein ThiS. In vitro, sulfur can be provided by H(2)S. This is Thiazole synthase from Escherichia coli (strain K12 / MC4100 / BW2952).